The sequence spans 189 residues: Thermostable direct hemolysin 2 (189 aa).

The first 24 residues, 1 to 24, serve as a signal peptide directing secretion; it reads MKYRYFAKKSFLFISMLAAFKTFA. The cysteines at positions 175 and 185 are disulfide-linked.

It belongs to the TDH hemolysin family. As to quaternary structure, homodimer.

Functionally, bacterial hemolysins are exotoxins that attack blood cell membranes and cause cell rupture by mechanisms not clearly defined. The polypeptide is Thermostable direct hemolysin 2 (tdh2) (Vibrio parahaemolyticus serotype O3:K6 (strain RIMD 2210633)).